Here is a 196-residue protein sequence, read N- to C-terminus: 3-isopropylmalate dehydratase small subunit (196 aa).

The protein belongs to the LeuD family. LeuD type 1 subfamily. As to quaternary structure, heterodimer of LeuC and LeuD.

It carries out the reaction (2R,3S)-3-isopropylmalate = (2S)-2-isopropylmalate. Its pathway is amino-acid biosynthesis; L-leucine biosynthesis; L-leucine from 3-methyl-2-oxobutanoate: step 2/4. Its function is as follows. Catalyzes the isomerization between 2-isopropylmalate and 3-isopropylmalate, via the formation of 2-isopropylmaleate. The sequence is that of 3-isopropylmalate dehydratase small subunit from Rhodopirellula baltica (strain DSM 10527 / NCIMB 13988 / SH1).